Reading from the N-terminus, the 187-residue chain is Lysozyme 3 (187 aa).

Positions 1–18 (MNGLFLFCVATTAALAYG) are cleaved as a signal peptide. In terms of domain architecture, I-type lysozyme spans 68–183 (TGIVSQQCLQ…WSHVHAQGCS (116 aa)). Disulfide bonds link cysteine 75–cysteine 151, cysteine 80–cysteine 86, cysteine 91–cysteine 100, cysteine 113–cysteine 133, cysteine 123–cysteine 129, and cysteine 147–cysteine 165. Glutamate 83 serves as the catalytic Proton donor. Catalysis depends on aspartate 94, which acts as the Nucleophile. 106–112 (KEGYWHD) lines the substrate pocket. Residues tyrosine 137 and 158–160 (HNG) each bind substrate.

In terms of tissue distribution, highest levels of expression detected in the digestive glands. Lower levels in the mantle, labial palps, gills and style-midgut sac, and lowest levels detected in the hemocytes. Not detected in the gonads.

The protein localises to the secreted. It carries out the reaction Hydrolysis of (1-&gt;4)-beta-linkages between N-acetylmuramic acid and N-acetyl-D-glucosamine residues in a peptidoglycan and between N-acetyl-D-glucosamine residues in chitodextrins.. Functionally, has antibacterial activity against the Gram-negative bacterium E.coli. No antibacterial activity detected against the Gram-negative bacterium V.vulnificus. The polypeptide is Lysozyme 3 (Crassostrea virginica (Eastern oyster)).